The chain runs to 382 residues: Lysophosphatidylserine lipase ABHD12 (382 aa).

Over residues 1 to 12 (MRKRKGSADHDS) the composition is skewed to basic and acidic residues. A disordered region spans residues 1-45 (MRKRKGSADHDSSFTATLTDGSSDLKQCHKGTDADTDPGGSGKEM). At 1–60 (MRKRKGSADHDSSFTATLTDGSSDLKQCHKGTDADTDPGGSGKEMGRRCRRGGLMWRLRR) the chain is on the cytoplasmic side. The span at 13-25 (SFTATLTDGSSDL) shows a compositional bias: polar residues. A helical membrane pass occupies residues 61–81 (ILIWLLGIYIAIPVIIKVCPS). Residues 82-382 (IQAKLVFLNF…DFLRAPHPHG (301 aa)) are Extracellular-facing. Asparagine 109 carries N-linked (GlcNAc...) asparagine glycosylation. Catalysis depends on serine 232, which acts as the Nucleophile. Residues aspartate 319 and histidine 358 each act as charge relay system in the active site.

The protein belongs to the serine esterase family. As to expression, ubiquitously expressed in adult tissues.

Its subcellular location is the endoplasmic reticulum membrane. It catalyses the reaction 1-(9Z-octadecenoyl)-sn-glycero-3-phospho-L-serine + H2O = sn-glycero-3-phospho-L-serine + (9Z)-octadecenoate + H(+). It carries out the reaction 1-(9Z-octadecenoyl)-sn-glycero-3-phospho-(1'-sn-glycerol) + H2O = sn-glycero-3-phospho-(1'-sn-glycerol) + (9Z)-octadecenoate + H(+). The enzyme catalyses 1-(9Z-octadecenoyl)-sn-glycero-3-phospho-(1D-myo-inositol) + H2O = sn-glycero-3-phospho-1D-myo-inositol + (9Z)-octadecenoate + H(+). The catalysed reaction is 1-(9Z-octadecenoyl)-sn-glycero-3-phosphoethanolamine + H2O = sn-glycero-3-phosphoethanolamine + (9Z)-octadecenoate + H(+). It catalyses the reaction 1-(9Z-octadecenoyl)-sn-glycero-3-phosphocholine + H2O = 1-(9Z-octadecenoyl)-sn-glycerol + phosphocholine + H(+). It carries out the reaction 2-(9Z-octadecenoyl)-glycerol + H2O = glycerol + (9Z)-octadecenoate + H(+). The enzyme catalyses 1-hexadecanoyl-sn-glycero-3-phospho-L-serine + H2O = sn-glycero-3-phospho-L-serine + hexadecanoate + H(+). The catalysed reaction is 2-(5Z,8Z,11Z,14Z-eicosatetraenoyl)-glycerol + H2O = glycerol + (5Z,8Z,11Z,14Z)-eicosatetraenoate + H(+). It catalyses the reaction Hydrolyzes glycerol monoesters of long-chain fatty acids.. It carries out the reaction 1-decanoylglycerol + H2O = decanoate + glycerol + H(+). The enzyme catalyses 1-dodecanoylglycerol + H2O = dodecanoate + glycerol + H(+). The catalysed reaction is 1-tetradecanoylglycerol + H2O = tetradecanoate + glycerol + H(+). It catalyses the reaction 2-hexadecanoylglycerol + H2O = glycerol + hexadecanoate + H(+). It carries out the reaction 1-(9Z-octadecenoyl)-glycerol + H2O = glycerol + (9Z)-octadecenoate + H(+). The enzyme catalyses 2-(9Z,12Z-octadecadienoyl)-glycerol + H2O = (9Z,12Z)-octadecadienoate + glycerol + H(+). The catalysed reaction is 1-(5Z,8Z,11Z,14Z-eicosatetraenoyl)-glycerol + H2O = glycerol + (5Z,8Z,11Z,14Z)-eicosatetraenoate + H(+). It catalyses the reaction 1-(9Z,12Z-octadecadienoyl)-glycerol + H2O = (9Z,12Z)-octadecadienoate + glycerol + H(+). It carries out the reaction 1-hexadecanoylglycerol + H2O = glycerol + hexadecanoate + H(+). The enzyme catalyses 1-octadecanoylglycerol + H2O = octadecanoate + glycerol + H(+). The catalysed reaction is 1-octadecanoyl-2-(9,10-epoxyoctadecanoyl)-sn-glycero-3-phospho-L-serine + H2O = 9,10-epoxyoctadecanoate + 1-octadecanoyl-sn-glycero-3-phosphoserine + H(+). It catalyses the reaction 1-octadecanoyl-2-(10-hydroxyoctadecanoyl)-sn-glycero-3-phospho-L-serine + H2O = 1-octadecanoyl-sn-glycero-3-phosphoserine + 10-hydroxyoctadecanoate + H(+). It carries out the reaction 1-hexadecanoyl-2-(10-hydroxyoctadecanoyl)-sn-glycero-3-phospho-L-serine + H2O = 10-hydroxyoctadecanoate + 1-hexadecanoyl-sn-glycero-3-phospho-L-serine + H(+). Its function is as follows. Lysophosphatidylserine (LPS) lipase that mediates the hydrolysis of lysophosphatidylserine, a class of signaling lipids that regulates immunological and neurological processes. Represents a major lysophosphatidylserine lipase in the brain, thereby playing a key role in the central nervous system. Also able to hydrolyze oxidized phosphatidylserine; oxidized phosphatidylserine is produced in response to severe inflammatory stress and constitutes a proapoptotic 'eat me' signal. Also has monoacylglycerol (MAG) lipase activity: hydrolyzes 2-arachidonoylglycerol (2-AG), thereby acting as a regulator of endocannabinoid signaling pathways. Has a strong preference for very-long-chain lipid substrates; substrate specificity is likely due to improved catalysis and not improved substrate binding. This is Lysophosphatidylserine lipase ABHD12 from Danio rerio (Zebrafish).